We begin with the raw amino-acid sequence, 153 residues long: MKAFNKLFSLVVASVLVFSLAGCGDKEESKKFSANLNGTEIAITYVYKGDKVLKQSSETKIQFASIGATTKEDAAKTLEPLSAKYKNIAGVEEKLTYTDTYAQENVTIDMEKVDFKALQGISGINVSAEDAKKGITMAQMELVMKAAGFKEVK.

Positions 1–22 (MKAFNKLFSLVVASVLVFSLAG) are cleaved as a signal peptide. Cys-23 is lipidated: N-palmitoyl cysteine. The S-diacylglycerol cysteine moiety is linked to residue Cys-23.

It to L.monocytogenes lmo0207.

Its subcellular location is the cell membrane. This is an uncharacterized protein from Escherichia coli (strain K12).